The chain runs to 462 residues: uncharacterized protein (462 aa).

A disordered region spans residues 405–462; the sequence is QPIGNNKSSPMKREFTAMEEDKTETGDIFKLLSQQKPAKGAKSKSKKYKKTEEDLSAV. Basic and acidic residues predominate over residues 415 to 431; that stretch reads MKREFTAMEEDKTETGD. Over residues 443 to 453 the composition is skewed to basic residues; it reads KGAKSKSKKYK.

This is an uncharacterized protein from Magallana gigas (Pacific oyster).